Here is a 284-residue protein sequence, read N- to C-terminus: MKLVIVSGRSGSGKSVALRVLEDLGYYCVDNLPLPLIGSLLEQLKGSNDLVAISVDVRNLPEQDKVLVKQLASLPEGTELTSFFLNSSDKVLLKRYSETRRLHPLSKSRVSLQEAIKLEGKLLEPLSQQMDHYIDTSNLNIYELSDQVRQILLGSVDKELVINFESFGFKHGMPTEADFMFDVRFLPNPHWEPELRPLTGLDEPVAEFLNRQPLVNKFIWQIENLLETWLPHLERNNRSYLTIAIGCTGGQHRSVYVAEQLAKRFSNGKHKVNARHRELSHAKA.

Position 8 to 15 (8 to 15 (GRSGSGKS)) interacts with ATP. 56–59 (DVRN) is a GTP binding site.

This sequence belongs to the RapZ-like family.

In terms of biological role, displays ATPase and GTPase activities. This Shewanella oneidensis (strain ATCC 700550 / JCM 31522 / CIP 106686 / LMG 19005 / NCIMB 14063 / MR-1) protein is Nucleotide-binding protein SO_3964.